Reading from the N-terminus, the 510-residue chain is Inositol-3-phosphate synthase (510 aa).

Residues Gly-70, Gly-71, Asn-72, Asn-73, Asp-143, Ile-180, Gln-190, Arg-193, Thr-230, Ala-231, Asn-232, Thr-233, Gly-281, Ser-282, Asp-306, Ser-309, Asn-340, Asn-341, Asp-342, Lys-355, Gly-393, Asp-394, Asp-422, and Ser-423 each contribute to the NAD(+) site.

The protein belongs to the myo-inositol 1-phosphate synthase family. The cofactor is NAD(+).

It localises to the cytoplasm. The protein resides in the cytosol. The protein localises to the nucleus. It carries out the reaction D-glucose 6-phosphate = 1D-myo-inositol 3-phosphate. The protein operates within polyol metabolism; myo-inositol biosynthesis; myo-inositol from D-glucose 6-phosphate: step 1/2. Key enzyme in myo-inositol biosynthesis pathway that catalyzes the conversion of glucose 6-phosphate to 1-myo-inositol 1-phosphate in a NAD-dependent manner. The polypeptide is Inositol-3-phosphate synthase (Sesamum indicum (Oriental sesame)).